The chain runs to 1059 residues: Putative ATP-dependent RNA helicase BoYb (1059 aa).

The Q motif motif lies at 54–82 (RRFAEVSLLPDILETMRNLGLNRLLRLQS). Residues 87-284 (HLAGGSGHGA…RAVNDKPALV (198 aa)) form the Helicase ATP-binding domain. ATP is bound at residue 100–107 (GSPASGRT). A DEAD box motif is present at residues 230–233 (DDVD). The 65-residue stretch at 575 to 639 (PPVAGAICMY…GKLFECPEAL (65 aa)) folds into the Tudor domain. The segment at 756–787 (VQDSKEKANSKPHEKMKGKMTDQPAKLQSQPP) is disordered. Basic and acidic residues predominate over residues 757–775 (QDSKEKANSKPHEKMKGKM).

Its subcellular location is the cytoplasm. It carries out the reaction ATP + H2O = ADP + phosphate + H(+). Involved in primary piRNA biogenesis in germline cells. This chain is Putative ATP-dependent RNA helicase BoYb (BoYb), found in Drosophila melanogaster (Fruit fly).